Here is a 66-residue protein sequence, read N- to C-terminus: Translational regulator CsrA (66 aa).

This sequence belongs to the CsrA/RsmA family. As to quaternary structure, homodimer; the beta-strands of each monomer intercalate to form a hydrophobic core, while the alpha-helices form wings that extend away from the core.

The protein localises to the cytoplasm. In terms of biological role, a key translational regulator that binds mRNA to regulate translation initiation and/or mRNA stability. Mediates global changes in gene expression, shifting from rapid growth to stress survival by linking envelope stress, the stringent response and the catabolite repression systems. Usually binds in the 5'-UTR; binding at or near the Shine-Dalgarno sequence prevents ribosome-binding, repressing translation, binding elsewhere in the 5'-UTR can activate translation and/or stabilize the mRNA. Its function is antagonized by small RNA(s). This Alkalilimnicola ehrlichii (strain ATCC BAA-1101 / DSM 17681 / MLHE-1) protein is Translational regulator CsrA.